A 150-amino-acid chain; its full sequence is Snake venom vascular endothelial growth factor toxin barietin (150 aa).

A signal peptide spans 1 to 24 (MAAYLLAVAILFCIQGWPSGTVQG). Glutamate 25 carries the pyrrolidone carboxylic acid (Glu) modification. 3 cysteine pairs are disulfide-bonded: cysteine 38–cysteine 80, cysteine 69–cysteine 115, and cysteine 73–cysteine 117. Residues 119–150 (PRSGSRVNIGKHKRSPEEGEREPSSPLTPGSL) form a disordered region. The propeptide occupies 122-150 (GSRVNIGKHKRSPEEGEREPSSPLTPGSL).

It belongs to the PDGF/VEGF growth factor family. Snake venom VEGF subfamily. As to quaternary structure, homodimer; disulfide-linked. Interacts with high affinity with VEGF receptor-2 (KDR), and with a lower affinity with VEGF receptor-1 (FLT1). Does not bind VEGF receptor-3 (FLT4) and neuropilin-1 (NRP1). In terms of tissue distribution, expressed by the venom gland.

The protein localises to the secreted. Its function is as follows. Snake venom VEGFs that may contribute to venom dispersion and prey subjugation by inducing vascular permeability and hypotension. This protein induces an increase in capillary permeability after intradermal injection, as well as a drastic hypotensive effect after intravenous injection. The hypotension is mediated by nitric oxide (NO), which is produced by VEGF-activated endothelium NO synthase. Also induces angiogenesis in vitro, probably through VEGF receptor (KDR/VEGFR-2) signaling. This Bitis arietans (African puff adder) protein is Snake venom vascular endothelial growth factor toxin barietin.